Here is a 256-residue protein sequence, read N- to C-terminus: Ribosomal RNA large subunit methyltransferase E (256 aa).

G48, W50, D68, D86, and D111 together coordinate S-adenosyl-L-methionine. K151 acts as the Proton acceptor in catalysis. In terms of domain architecture, TRAM spans 198–256 (PVSPGDELDATVVDIGSEGDGIIKIDGYTLFVPGVENGDSVRVRVTDLKSNVGFAEVIE).

Belongs to the class I-like SAM-binding methyltransferase superfamily. RNA methyltransferase RlmE family.

It is found in the cytoplasm. The enzyme catalyses uridine(2552) in 23S rRNA + S-adenosyl-L-methionine = 2'-O-methyluridine(2552) in 23S rRNA + S-adenosyl-L-homocysteine + H(+). Its function is as follows. Specifically methylates the uridine in position 2552 of 23S rRNA at the 2'-O position of the ribose in the fully assembled 50S ribosomal subunit. The polypeptide is Ribosomal RNA large subunit methyltransferase E (Haloquadratum walsbyi (strain DSM 16790 / HBSQ001)).